A 314-amino-acid polypeptide reads, in one-letter code: tRNA dimethylallyltransferase 1 (314 aa).

17–24 (GPTAAGKT) lines the ATP pocket. 19–24 (TAAGKT) is a substrate binding site. Positions 42–45 (DSRQ) are interaction with substrate tRNA.

This sequence belongs to the IPP transferase family. As to quaternary structure, monomer. The cofactor is Mg(2+).

The catalysed reaction is adenosine(37) in tRNA + dimethylallyl diphosphate = N(6)-dimethylallyladenosine(37) in tRNA + diphosphate. Functionally, catalyzes the transfer of a dimethylallyl group onto the adenine at position 37 in tRNAs that read codons beginning with uridine, leading to the formation of N6-(dimethylallyl)adenosine (i(6)A). This Syntrophotalea carbinolica (strain DSM 2380 / NBRC 103641 / GraBd1) (Pelobacter carbinolicus) protein is tRNA dimethylallyltransferase 1.